The sequence spans 336 residues: Probable allantoicase 2 (336 aa).

Belongs to the allantoicase family.

The enzyme catalyses allantoate + H2O = (S)-ureidoglycolate + urea. Its pathway is nitrogen metabolism; (S)-allantoin degradation; (S)-ureidoglycolate from allantoate (aminidohydrolase route): step 1/1. In Burkholderia pseudomallei (strain K96243), this protein is Probable allantoicase 2.